The sequence spans 372 residues: tRNA-specific 2-thiouridylase MnmA (372 aa).

ATP is bound by residues 16 to 23 (GMSGGVDS) and M42. The segment at 102–104 (NPD) is interaction with target base in tRNA. C107 acts as the Nucleophile in catalysis. The cysteines at positions 107 and 205 are disulfide-linked. G132 is an ATP binding site. The interval 155–157 (KDQ) is interaction with tRNA. Residue C205 is the Cysteine persulfide intermediate of the active site. Residues 317 to 318 (RY) form an interaction with tRNA region.

Belongs to the MnmA/TRMU family.

Its subcellular location is the cytoplasm. The catalysed reaction is S-sulfanyl-L-cysteinyl-[protein] + uridine(34) in tRNA + AH2 + ATP = 2-thiouridine(34) in tRNA + L-cysteinyl-[protein] + A + AMP + diphosphate + H(+). Its function is as follows. Catalyzes the 2-thiolation of uridine at the wobble position (U34) of tRNA, leading to the formation of s(2)U34. In Shewanella baltica (strain OS195), this protein is tRNA-specific 2-thiouridylase MnmA.